Reading from the N-terminus, the 218-residue chain is MADSKAKPTKAANKTPPKSPGDPAKAAKRLSLESEGANEGAAAAPELSALEEAFRRFAVHGDTRATGKEMHGKNWSKLCKDCHVIDGKNVTVTDVDIVFSKIKGKSCRTITFEQFQEALEELAKKRFKDKSSEEAVREVHRLIEGRAPVISGVTKAVSSPTVSRLTDTSKFTGSHKERFDQSGKGKGKAGRVDLVDESGYVPGYKHAGTYDQKVQGGK.

Residues 1–45 (MADSKAKPTKAANKTPPKSPGDPAKAAKRLSLESEGANEGAAAAP) form a disordered region. Residues 2–115 (ADSKAKPTKA…SCRTITFEQF (114 aa)) form a mediates interaction with LIMK1 region. At Thr15 the chain carries Phosphothreonine. 3 positions are modified to phosphoserine: Ser19, Ser31, and Ser34. Residues 33–45 (ESEGANEGAAAAP) show a composition bias toward low complexity. Zn(2+) contacts are provided by His60, His71, Cys79, and Cys82. Residue Thr91 is modified to Phosphothreonine. Phosphoserine is present on Ser106. A glycan (O-linked (GlcNAc) serine) is linked at Ser151. Residues Ser158 and Ser159 each carry the phosphoserine modification. Residues 165 to 192 (LTDTSKFTGSHKERFDQSGKGKGKAGRV) are disordered. The span at 174–183 (SHKERFDQSG) shows a compositional bias: basic and acidic residues.

Belongs to the TPPP family. In terms of assembly, homodimer. Binds tubulin; binding is inhibited by GTP. Interacts with MAPK1. Interacts with GAPDH; the interaction is direct. Interacts with LIMK1 (via the PDZ domain); the interaction is direct. Interacts with LIMK2. Interacts with HDAC6; thereby inhibiting the tubulin deacetylase activity of HDAC6. Interacts with aggregated SNCA; may have a pro-aggregatory role in synucleinopathies. Interacts with DYNLL1. Interacts (via C-terminus) with S100A2, S100A6 and S100B; these interactions inhibit TPPP dimerization. The cofactor is Mg(2+). Post-translationally, phosphorylated by LIMK1 on serine residues; phosphorylation may alter the tubulin polymerization activity. Phosphorylation by LIMK2, but not LIMK1, regulates astral microtubule organization at early stage of mitosis. Phosphorylation by ROCK1 at Ser-31, Ser-106 and Ser-158 inhibits interaction with HDAC6, resulting in decreased acetylation of tubulin, increased cell motility and entry into S-phase. Phosphorylation by CDK1 inhibits the microtubule polymerizing activity. Degraded by the proteasome; zinc-binding inhibits degradation by the proteasome. Predominantly expressed in mature oligodendrocytes.

Its subcellular location is the golgi outpost. The protein localises to the cytoplasm. The protein resides in the cytoskeleton. It is found in the microtubule organizing center. It localises to the nucleus. Its subcellular location is the spindle. The enzyme catalyses GTP + H2O = GDP + phosphate + H(+). Its function is as follows. Regulator of microtubule dynamics that plays a key role in myelination by promoting elongation of the myelin sheath. Acts as a microtubule nucleation factor in oligodendrocytes: specifically localizes to the postsynaptic Golgi apparatus region, also named Golgi outpost, and promotes microtubule nucleation, an important step for elongation of the myelin sheath. Required for both uniform polarized growth of distal microtubules as well as directing the branching of proximal processes. Shows magnesium-dependent GTPase activity; the role of the GTPase activity is unclear. In addition to microtubule nucleation activity, also involved in microtubule bundling and stabilization of existing microtubules, thereby maintaining the integrity of the microtubule network. Regulates microtubule dynamics by promoting tubulin acetylation: acts by inhibiting the tubulin deacetylase activity of HDAC6. Also regulates cell migration: phosphorylation by ROCK1 inhibits interaction with HDAC6, resulting in decreased acetylation of tubulin and increased cell motility. Plays a role in cell proliferation by regulating the G1/S-phase transition. Involved in astral microtubule organization and mitotic spindle orientation during early stage of mitosis; this process is regulated by phosphorylation by LIMK2. The sequence is that of Tubulin polymerization-promoting protein from Rattus norvegicus (Rat).